The following is a 341-amino-acid chain: Glycerol-3-phosphate dehydrogenase [NAD(P)+] (341 aa).

NADPH contacts are provided by Ser14, Phe15, Arg35, and Lys108. The sn-glycerol 3-phosphate site is built by Lys108 and Gly136. Ala140 lines the NADPH pocket. Positions 191, 244, 254, 255, and 256 each coordinate sn-glycerol 3-phosphate. Residue Lys191 is the Proton acceptor of the active site. Residue Arg255 participates in NADPH binding. Residues Val279 and Glu281 each coordinate NADPH.

Belongs to the NAD-dependent glycerol-3-phosphate dehydrogenase family.

The protein localises to the cytoplasm. The catalysed reaction is sn-glycerol 3-phosphate + NAD(+) = dihydroxyacetone phosphate + NADH + H(+). It catalyses the reaction sn-glycerol 3-phosphate + NADP(+) = dihydroxyacetone phosphate + NADPH + H(+). It participates in membrane lipid metabolism; glycerophospholipid metabolism. In terms of biological role, catalyzes the reduction of the glycolytic intermediate dihydroxyacetone phosphate (DHAP) to sn-glycerol 3-phosphate (G3P), the key precursor for phospholipid synthesis. The chain is Glycerol-3-phosphate dehydrogenase [NAD(P)+] from Pseudomonas fluorescens (strain ATCC BAA-477 / NRRL B-23932 / Pf-5).